The chain runs to 217 residues: LexA repressor (217 aa).

Residues 28 to 48 (RAEIAAEFGFSSPNAAEEHLR) constitute a DNA-binding region (H-T-H motif). Residues Ser-136 and Lys-173 each act as for autocatalytic cleavage activity in the active site.

The protein belongs to the peptidase S24 family. In terms of assembly, homodimer.

It carries out the reaction Hydrolysis of Ala-|-Gly bond in repressor LexA.. Functionally, represses a number of genes involved in the response to DNA damage (SOS response), including recA and lexA. In the presence of single-stranded DNA, RecA interacts with LexA causing an autocatalytic cleavage which disrupts the DNA-binding part of LexA, leading to derepression of the SOS regulon and eventually DNA repair. This chain is LexA repressor, found in Cupriavidus taiwanensis (strain DSM 17343 / BCRC 17206 / CCUG 44338 / CIP 107171 / LMG 19424 / R1) (Ralstonia taiwanensis (strain LMG 19424)).